An 84-amino-acid polypeptide reads, in one-letter code: MDDKFTTLPCELEDYPGSITCPHCSAQITTAVDHVVGKMSWVVCTAITLACLPCCCIPFLCNSTKDVRHTCPKCKQAVFVYKIL.

In terms of domain architecture, LITAF spans 1–83 (MDDKFTTLPC…CKQAVFVYKI (83 aa)). Residues C21 and C24 each coordinate Zn(2+). The interval 39 to 61 (MSWVVCTAITLACLPCCCIPFLC) is membrane-binding amphipathic helix. Positions 71 and 74 each coordinate Zn(2+).

Its subcellular location is the host membrane. This is an uncharacterized protein from Dryophytes versicolor (chameleon treefrog).